A 720-amino-acid polypeptide reads, in one-letter code: Polyribonucleotide nucleotidyltransferase (720 aa).

Residues Asp487 and Asp493 each coordinate Mg(2+). In terms of domain architecture, KH spans 554–613 (PRIETFKIPTDKIREVIGTGGKVIREIVEKTGAKVNIEDDGTVKVASSDGEAMKAAIKWI). Residues 623–691 (GQIYDGTVVK…DRGKTRLSMK (69 aa)) form the S1 motif domain. The disordered stretch occupies residues 699–720 (EDLEAKDKVAEGEKAPREAAGE). Residues 701-720 (LEAKDKVAEGEKAPREAAGE) show a composition bias toward basic and acidic residues.

It belongs to the polyribonucleotide nucleotidyltransferase family. It depends on Mg(2+) as a cofactor.

The protein resides in the cytoplasm. The catalysed reaction is RNA(n+1) + phosphate = RNA(n) + a ribonucleoside 5'-diphosphate. Involved in mRNA degradation. Catalyzes the phosphorolysis of single-stranded polyribonucleotides processively in the 3'- to 5'-direction. In Bradyrhizobium diazoefficiens (strain JCM 10833 / BCRC 13528 / IAM 13628 / NBRC 14792 / USDA 110), this protein is Polyribonucleotide nucleotidyltransferase.